Here is a 154-residue protein sequence, read N- to C-terminus: Large ribosomal subunit protein uL13 (154 aa).

Residues 132–154 are disordered; it reads PHEAQQPETLDVGAMNRKNKRAA.

It belongs to the universal ribosomal protein uL13 family. As to quaternary structure, part of the 50S ribosomal subunit.

This protein is one of the early assembly proteins of the 50S ribosomal subunit, although it is not seen to bind rRNA by itself. It is important during the early stages of 50S assembly. In Rhodopseudomonas palustris (strain HaA2), this protein is Large ribosomal subunit protein uL13.